A 302-amino-acid polypeptide reads, in one-letter code: MAGRELSHLQQLEAESIQIIREVAAEFDNPVMLYSIGKDSSVMLHLARKAFYPGKIPFPLLHVDTGWKFKEMIAFRDTQAKKFGFELLTHINPEGLAQGINPFDHGSAKHTDIMKTQGLKQALNQYGFDAAFGGARRDEEKSRAKERVYSFRDRHHRWDPKNQRPELWRTYNGAVNKGESIRVFPLSNWTELDIWQYIYQENIELVPLYFAAKRKVVERGGQLIMADDERMQLAEGEQIKEEVVRFRTLGCYPLTAAMHSEADSLEKIIEEMLLTRSSERQGRLIDSDQSASMEQKKRQGYF.

A disordered region spans residues 280–302 (RQGRLIDSDQSASMEQKKRQGYF).

Belongs to the PAPS reductase family. CysD subfamily. Heterodimer composed of CysD, the smaller subunit, and CysN.

The enzyme catalyses sulfate + ATP + H(+) = adenosine 5'-phosphosulfate + diphosphate. The protein operates within sulfur metabolism; hydrogen sulfide biosynthesis; sulfite from sulfate: step 1/3. With CysN forms the ATP sulfurylase (ATPS) that catalyzes the adenylation of sulfate producing adenosine 5'-phosphosulfate (APS) and diphosphate, the first enzymatic step in sulfur assimilation pathway. APS synthesis involves the formation of a high-energy phosphoric-sulfuric acid anhydride bond driven by GTP hydrolysis by CysN coupled to ATP hydrolysis by CysD. This Shewanella putrefaciens (strain CN-32 / ATCC BAA-453) protein is Sulfate adenylyltransferase subunit 2.